A 118-amino-acid chain; its full sequence is Large ribosomal subunit protein uL24 (118 aa).

This sequence belongs to the universal ribosomal protein uL24 family. In terms of assembly, part of the 50S ribosomal subunit.

Functionally, one of two assembly initiator proteins, it binds directly to the 5'-end of the 23S rRNA, where it nucleates assembly of the 50S subunit. One of the proteins that surrounds the polypeptide exit tunnel on the outside of the subunit. In Prochlorococcus marinus (strain MIT 9301), this protein is Large ribosomal subunit protein uL24.